Reading from the N-terminus, the 1430-residue chain is DNA-directed RNA polymerase subunit beta' (1430 aa).

The Zn(2+) site is built by C71, C73, C86, and C89. Mg(2+)-binding residues include D461, D463, and D465. 4 residues coordinate Zn(2+): C815, C889, C896, and C899. Residues 1388-1430 are disordered; the sequence is RRQEAPAPAATPEQQAEEVFASLGQGEGEGPSPSDEASGPEVE. Low complexity predominate over residues 1392–1405; sequence APAPAATPEQQAEE.

It belongs to the RNA polymerase beta' chain family. The RNAP catalytic core consists of 2 alpha, 1 beta, 1 beta' and 1 omega subunit. When a sigma factor is associated with the core the holoenzyme is formed, which can initiate transcription. Mg(2+) is required as a cofactor. The cofactor is Zn(2+).

The catalysed reaction is RNA(n) + a ribonucleoside 5'-triphosphate = RNA(n+1) + diphosphate. Functionally, DNA-dependent RNA polymerase catalyzes the transcription of DNA into RNA using the four ribonucleoside triphosphates as substrates. The chain is DNA-directed RNA polymerase subunit beta' from Halorhodospira halophila (strain DSM 244 / SL1) (Ectothiorhodospira halophila (strain DSM 244 / SL1)).